A 1449-amino-acid chain; its full sequence is ABC transporter G family member 21 (1449 aa).

The span at 1-10 shows a compositional bias: basic and acidic residues; it reads MEEYELREIA. The disordered stretch occupies residues 1–49; that stretch reads MEEYELREIALQEGGSNLDINTPPNYDNPVGDGSSPPDSPDIQKSENQF. Positions 14–25 are enriched in polar residues; sequence GGSNLDINTPPN. The ABC transporter 1 domain maps to 130 to 383; that stretch reads ISFFNLFKPS…FIDLGFDCEP (254 aa). Residues 488–731 enclose the ABC transmembrane type-2 1 domain; it reads WGDKFSLISR…ILSVEGKDYL (244 aa). 5 helical membrane-spanning segments follow: residues 519 to 539, 577 to 597, 602 to 622, 634 to 654, and 747 to 767; these read IPGL…NAFL, IPLT…MFGL, GKFF…TNLF, ISQN…GYTI, and FITY…MEYF. Residues 818 to 1062 form the ABC transporter 2 domain; it reads FTWQNINYTV…LTSYFERYGV (245 aa). An ATP-binding site is contributed by 854–861; sequence GSSGAGKT. An ABC transmembrane type-2 2 domain is found at 1152-1386; that stretch reads FYTYGSFIQS…PISEPLTGYV (235 aa). The next 6 helical transmembrane spans lie at 1155 to 1175, 1188 to 1208, 1228 to 1248, 1266 to 1286, 1296 to 1316, and 1423 to 1443; these read YGSF…FWSL, FIFE…PQFI, FAIS…TIFF, FYFW…GQAV, AHTL…VMVI, and LALI…FVYI.

It belongs to the ABC transporter superfamily. ABCG family. PDR (TC 3.A.1.205) subfamily.

The protein resides in the membrane. The sequence is that of ABC transporter G family member 21 (abcG21) from Dictyostelium discoideum (Social amoeba).